Reading from the N-terminus, the 298-residue chain is Lipoyl synthase (298 aa).

The [4Fe-4S] cluster site is built by cysteine 40, cysteine 45, cysteine 51, cysteine 67, cysteine 71, cysteine 74, and serine 280. Residues alanine 53–serine 269 form the Radical SAM core domain.

This sequence belongs to the radical SAM superfamily. Lipoyl synthase family. [4Fe-4S] cluster serves as cofactor.

The protein localises to the cytoplasm. The catalysed reaction is [[Fe-S] cluster scaffold protein carrying a second [4Fe-4S](2+) cluster] + N(6)-octanoyl-L-lysyl-[protein] + 2 oxidized [2Fe-2S]-[ferredoxin] + 2 S-adenosyl-L-methionine + 4 H(+) = [[Fe-S] cluster scaffold protein] + N(6)-[(R)-dihydrolipoyl]-L-lysyl-[protein] + 4 Fe(3+) + 2 hydrogen sulfide + 2 5'-deoxyadenosine + 2 L-methionine + 2 reduced [2Fe-2S]-[ferredoxin]. The protein operates within protein modification; protein lipoylation via endogenous pathway; protein N(6)-(lipoyl)lysine from octanoyl-[acyl-carrier-protein]. In terms of biological role, catalyzes the radical-mediated insertion of two sulfur atoms into the C-6 and C-8 positions of the octanoyl moiety bound to the lipoyl domains of lipoate-dependent enzymes, thereby converting the octanoylated domains into lipoylated derivatives. The sequence is that of Lipoyl synthase from Bacillus cereus (strain B4264).